Here is a 580-residue protein sequence, read N- to C-terminus: MSLDQAIPEALQALRTRFGAAVRAEQATGEAFPVLWLDASVWEAAHRFLREEIAAPFPLLADLWAIDESLRQHRTGQPASRITLCSHLVSLVRNADLRLKLATDGRAPSIAGVYANADWYEREAHDMFGLDFGRETRRILMPPTWEGHPLLKTHYARATEKPPFVLTDRLFEAEERATITDPDLLGLPTLRDGEELMVLNFGPHHPSTHGVFRILLGLDGEEVVWAWPDIGYHHRGAEKMAERQTWHGFIPYCDRIDYLGGVISELPYLLAVERLCGIAVPPRAQMIRVMLCEFYRIMNHLLFYGTMAQDVGAMSPVFYMFTDREKGHEILNAITGARMHPAFFRIGGVAMDLPNGWDAMVRGFLDWMPARLDEYERMVLRSELFRARTVGVGAYDTDMALTWGTTGPGLRATGCDWDLRKLRPYSGYEQFEFEVPLGQRGDIFDRTRVRADEMRESLKIIRQCLENMPEGPVKADHPLTTPPPRGAMQKDIETLIAHFLQSSWGTVVPAGEATGQIEGHRGLTQYSVVSDGGTQSYRTRIRTPSFAHLQMIPKIVPGMTVADLVAHIASIDFVMSDVDR.

Residues 1 to 171 (MSLDQAIPEA…PPFVLTDRLF (171 aa)) form an NADH dehydrogenase I subunit C region. The segment at 195 to 580 (ELMVLNFGPH…IDFVMSDVDR (386 aa)) is NADH dehydrogenase I subunit D.

This sequence in the N-terminal section; belongs to the complex I 30 kDa subunit family. In the C-terminal section; belongs to the complex I 49 kDa subunit family. In terms of assembly, NDH-1 is composed of 13 different subunits. Subunits NuoB, CD, E, F, and G constitute the peripheral sector of the complex.

Its subcellular location is the cell inner membrane. It catalyses the reaction a quinone + NADH + 5 H(+)(in) = a quinol + NAD(+) + 4 H(+)(out). NDH-1 shuttles electrons from NADH, via FMN and iron-sulfur (Fe-S) centers, to quinones in the respiratory chain. The immediate electron acceptor for the enzyme in this species is believed to be ubiquinone. Couples the redox reaction to proton translocation (for every two electrons transferred, four hydrogen ions are translocated across the cytoplasmic membrane), and thus conserves the redox energy in a proton gradient. This Cereibacter sphaeroides (strain KD131 / KCTC 12085) (Rhodobacter sphaeroides) protein is NADH-quinone oxidoreductase subunit C/D.